Consider the following 199-residue polypeptide: Recombination protein RecR (199 aa).

The C4-type zinc-finger motif lies at 56-71; sequence CATCGNVAQEELCNIC. A Toprim domain is found at 79-174; that stretch reads SVICVVEEPK…KVTRLASGLP (96 aa).

This sequence belongs to the RecR family.

May play a role in DNA repair. It seems to be involved in an RecBC-independent recombinational process of DNA repair. It may act with RecF and RecO. The chain is Recombination protein RecR from Streptomyces avermitilis (strain ATCC 31267 / DSM 46492 / JCM 5070 / NBRC 14893 / NCIMB 12804 / NRRL 8165 / MA-4680).